Consider the following 563-residue polypeptide: Cytochrome b (563 aa).

12 consecutive transmembrane segments (helical) span residues 36–61 (SYWL…LLYY), 81–104 (SVLL…HMFR), 119–141 (WVTG…SLVS), 193–220 (RLLG…ERYG), 255–276 (LSIV…ANIN), 326–345 (ILTI…LPFL), 358–379 (FWTW…WGYL), 387–409 (TSAQ…YLWP), 436–454 (ILLG…FNFI), 458–476 (TLIN…IYAL), 505–527 (IAFF…MWTL), and 539–557 (MDLG…LYHY). Heme is bound by residues His87 and His101. The heme site is built by His198 and His212.

The protein belongs to the cytochrome b family. In terms of assembly, it is a component of at least 2 distinct terminal oxidases, the quinol oxidase (SoxABC) and the alternate quinol oxidase with the core components SoxM and a Rieske Fe-S protein.

Its subcellular location is the cell membrane. Functionally, binds 2 heme groups (b586 and b606) which are not covalently bound to the protein. This is Cytochrome b (soxC) from Sulfolobus acidocaldarius (strain ATCC 33909 / DSM 639 / JCM 8929 / NBRC 15157 / NCIMB 11770).